A 968-amino-acid polypeptide reads, in one-letter code: RNA polymerase-associated protein RapA (968 aa).

Residues 163 to 332 enclose the Helicase ATP-binding domain; sequence EVGSRYAPRV…FARLRLLDPD (170 aa). An ATP-binding site is contributed by 176–183; that stretch reads DEVGLGKT. Residues 278 to 281 carry the DEAH box motif; that stretch reads DEAH. The 165-residue stretch at 491–655 folds into the Helicase C-terminal domain; sequence RVDWLIEFLK…EFADELINVL (165 aa).

The protein belongs to the SNF2/RAD54 helicase family. RapA subfamily. In terms of assembly, interacts with the RNAP. Has a higher affinity for the core RNAP than for the holoenzyme. Its ATPase activity is stimulated by binding to RNAP.

Transcription regulator that activates transcription by stimulating RNA polymerase (RNAP) recycling in case of stress conditions such as supercoiled DNA or high salt concentrations. Probably acts by releasing the RNAP, when it is trapped or immobilized on tightly supercoiled DNA. Does not activate transcription on linear DNA. Probably not involved in DNA repair. In Shewanella frigidimarina (strain NCIMB 400), this protein is RNA polymerase-associated protein RapA.